Reading from the N-terminus, the 188-residue chain is dCTP deaminase (188 aa).

Residues 111–116, 135–137, glutamine 156, tyrosine 170, lysine 179, and glutamine 180 each bind dCTP; these read KSTYAR and TLE. The Proton donor/acceptor role is filled by glutamate 137.

This sequence belongs to the dCTP deaminase family. In terms of assembly, homotrimer.

The catalysed reaction is dCTP + H2O + H(+) = dUTP + NH4(+). It participates in pyrimidine metabolism; dUMP biosynthesis; dUMP from dCTP (dUTP route): step 1/2. Catalyzes the deamination of dCTP to dUTP. This is dCTP deaminase from Rickettsia bellii (strain OSU 85-389).